The chain runs to 387 residues: Large ribosomal subunit protein uL3 (387 aa).

This sequence belongs to the universal ribosomal protein uL3 family.

It is found in the cytoplasm. In Eremothecium gossypii (strain ATCC 10895 / CBS 109.51 / FGSC 9923 / NRRL Y-1056) (Yeast), this protein is Large ribosomal subunit protein uL3 (RPL3).